We begin with the raw amino-acid sequence, 198 residues long: Dephospho-CoA kinase (198 aa).

A DPCK domain is found at R4–W198. ATP is bound at residue A12 to S17.

It belongs to the CoaE family.

The protein resides in the cytoplasm. The catalysed reaction is 3'-dephospho-CoA + ATP = ADP + CoA + H(+). It functions in the pathway cofactor biosynthesis; coenzyme A biosynthesis; CoA from (R)-pantothenate: step 5/5. Its function is as follows. Catalyzes the phosphorylation of the 3'-hydroxyl group of dephosphocoenzyme A to form coenzyme A. The sequence is that of Dephospho-CoA kinase from Parasynechococcus marenigrum (strain WH8102).